A 620-amino-acid chain; its full sequence is Somatic embryogenesis receptor kinase 4 (620 aa).

Positions M1–G33 are cleaved as a signal peptide. Residues D34–G234 lie on the Extracellular side of the membrane. LRR repeat units follow at residues N100–L122, E124–L146, K148–V170, Q171–S193, and L194–S215. The N-linked (GlcNAc...) asparagine glycan is linked to N110. N-linked (GlcNAc...) asparagine glycosylation is found at N156, N189, and N202. The interval L205 to Q227 is disordered. A compositionally biased stretch (pro residues) spans P209–S224. Residues G235–L255 traverse the membrane as a helical segment. At R256 to R620 the chain is on the cytoplasmic side. At T291 the chain carries Phosphothreonine. In terms of domain architecture, Protein kinase spans F294–N591. S295 is modified (phosphoserine). ATP contacts are provided by residues L300 to V308 and K322. 2 positions are modified to phosphoserine: S375 and S378. Residue D421 is the Proton acceptor of the active site. T454, T455, and T460 each carry phosphothreonine. Y468 carries the post-translational modification Phosphotyrosine. At S470 the chain carries Phosphoserine. Residue T471 is modified to Phosphothreonine. The residue at position 475 (S475) is a Phosphoserine. Residue T551 is modified to Phosphothreonine.

It belongs to the protein kinase superfamily. Ser/Thr protein kinase family. In terms of assembly, interacts with the EF-Tu receptor EFR and FLS2 in a specific ligand-induced manner. Interacts with TMK4/BARK1. Interacts with ERECTA in a EPF2-induced manner. Interacts with ERL1 in a EPF1-induced manner. Interacts with TMM. Forms a complex with MIK2 in response to SCOOP12 perception. In terms of processing, autophosphorylated on Thr and Tyr residues.

It localises to the cell membrane. The enzyme catalyses L-seryl-[protein] + ATP = O-phospho-L-seryl-[protein] + ADP + H(+). It carries out the reaction L-threonyl-[protein] + ATP = O-phospho-L-threonyl-[protein] + ADP + H(+). It catalyses the reaction L-tyrosyl-[protein] + ATP = O-phospho-L-tyrosyl-[protein] + ADP + H(+). Dual specificity kinase acting on both serine/threonine- and tyrosine-containing substrates. Positively regulates the BR-dependent plant growth pathway and negatively regulates the BR-independent cell-death pathway. Required during SCOOP small peptides (e.g. SCOOP10 and SCOOP12) perception and signaling; associates with MIK2 as a coreceptor upon MIK2 perception of SCOOP peptides, and relays the signaling through the activation of receptor-like cytosolic kinases (RLCKs) BIK1 and PBL1. The sequence is that of Somatic embryogenesis receptor kinase 4 from Arabidopsis thaliana (Mouse-ear cress).